Here is a 395-residue protein sequence, read N- to C-terminus: Chorismate synthase (395 aa).

Positions 40 and 46 each coordinate NADP(+). FMN contacts are provided by residues 137 to 139 (RSS), Gly308, 323 to 327 (KPLPT), and Arg349.

It belongs to the chorismate synthase family. As to quaternary structure, homotetramer. The cofactor is FMNH2.

It catalyses the reaction 5-O-(1-carboxyvinyl)-3-phosphoshikimate = chorismate + phosphate. It participates in metabolic intermediate biosynthesis; chorismate biosynthesis; chorismate from D-erythrose 4-phosphate and phosphoenolpyruvate: step 7/7. Catalyzes the anti-1,4-elimination of the C-3 phosphate and the C-6 proR hydrogen from 5-enolpyruvylshikimate-3-phosphate (EPSP) to yield chorismate, which is the branch point compound that serves as the starting substrate for the three terminal pathways of aromatic amino acid biosynthesis. This reaction introduces a second double bond into the aromatic ring system. This is Chorismate synthase from Gloeobacter violaceus (strain ATCC 29082 / PCC 7421).